A 449-amino-acid polypeptide reads, in one-letter code: Phosphoglucosamine mutase (449 aa).

S101 (phosphoserine intermediate) is an active-site residue. S101, D242, D244, and D246 together coordinate Mg(2+). A Phosphoserine modification is found at S101.

The protein belongs to the phosphohexose mutase family. Mg(2+) is required as a cofactor. In terms of processing, activated by phosphorylation.

It carries out the reaction alpha-D-glucosamine 1-phosphate = D-glucosamine 6-phosphate. Functionally, catalyzes the conversion of glucosamine-6-phosphate to glucosamine-1-phosphate. This is Phosphoglucosamine mutase from Bradyrhizobium sp. (strain BTAi1 / ATCC BAA-1182).